Here is a 357-residue protein sequence, read N- to C-terminus: Histidinol-phosphate aminotransferase (357 aa).

Position 218 is an N6-(pyridoxal phosphate)lysine (K218).

This sequence belongs to the class-II pyridoxal-phosphate-dependent aminotransferase family. Histidinol-phosphate aminotransferase subfamily. Homodimer. The cofactor is pyridoxal 5'-phosphate.

The catalysed reaction is L-histidinol phosphate + 2-oxoglutarate = 3-(imidazol-4-yl)-2-oxopropyl phosphate + L-glutamate. It functions in the pathway amino-acid biosynthesis; L-histidine biosynthesis; L-histidine from 5-phospho-alpha-D-ribose 1-diphosphate: step 7/9. This is Histidinol-phosphate aminotransferase from Chlorobium luteolum (strain DSM 273 / BCRC 81028 / 2530) (Pelodictyon luteolum).